The sequence spans 865 residues: Protein fluG (865 aa).

The GS beta-grasp domain occupies 442–533; that stretch reads PGVKYVWTQF…VMTWWKSEQG (92 aa). A GS catalytic domain is found at 540–865; sequence PRTNLLNINN…ARRKWLVERY (326 aa).

It belongs to the glutamine synthetase family.

It localises to the cytoplasm. Its function is as follows. May function as a GSI-related enzyme in synthesizing a small diffusible factor that acts as an extracellular signal directing asexual sporulation and perhaps other aspects of colony growth. May be involved in brlA activation (an early transcriptional regulator for conidiation specific gene). This chain is Protein fluG (fluG), found in Emericella nidulans (strain FGSC A4 / ATCC 38163 / CBS 112.46 / NRRL 194 / M139) (Aspergillus nidulans).